A 327-amino-acid chain; its full sequence is Thiamine-monophosphate kinase (327 aa).

Mg(2+)-binding residues include aspartate 30, serine 45, serine 46, and aspartate 47. Substrate is bound at residue histidine 54. Aspartate 76 contacts Mg(2+). ATP-binding positions include tyrosine 106, 123–124, and arginine 149; that span reads GD. Aspartate 124 contributes to the Mg(2+) binding site. Aspartate 221 is a binding site for Mg(2+). An ATP-binding site is contributed by serine 223. Residue aspartate 224 coordinates Mg(2+). Substrate-binding residues include glutamate 268 and phenylalanine 321.

Belongs to the thiamine-monophosphate kinase family.

The enzyme catalyses thiamine phosphate + ATP = thiamine diphosphate + ADP. It participates in cofactor biosynthesis; thiamine diphosphate biosynthesis; thiamine diphosphate from thiamine phosphate: step 1/1. In terms of biological role, catalyzes the ATP-dependent phosphorylation of thiamine-monophosphate (TMP) to form thiamine-pyrophosphate (TPP), the active form of vitamin B1. This is Thiamine-monophosphate kinase from Synechococcus elongatus (strain ATCC 33912 / PCC 7942 / FACHB-805) (Anacystis nidulans R2).